Here is a 371-residue protein sequence, read N- to C-terminus: NADH-ubiquinone oxidoreductase chain 1 (371 aa).

Helical transmembrane passes span 7-27, 44-64, 77-97, 109-129, 153-173, 180-200, 226-246, 263-283, 302-322, and 338-358; these read IISI…VAYV, PNAV…KLLL, LFFL…AVIP, LGIL…LLAG, LVLS…NLGV, AVLF…GSIA, AVVF…MCIL, VFNI…NWMV, GWLY…IFIL, and FCWT…PCIL.

It belongs to the complex I subunit 1 family.

Its subcellular location is the mitochondrion inner membrane. The enzyme catalyses a ubiquinone + NADH + 5 H(+)(in) = a ubiquinol + NAD(+) + 4 H(+)(out). Functionally, core subunit of the mitochondrial membrane respiratory chain NADH dehydrogenase (Complex I) that is believed to belong to the minimal assembly required for catalysis. Complex I functions in the transfer of electrons from NADH to the respiratory chain. The immediate electron acceptor for the enzyme is believed to be ubiquinone. The polypeptide is NADH-ubiquinone oxidoreductase chain 1 (ndh-1) (Neurospora crassa (strain ATCC 24698 / 74-OR23-1A / CBS 708.71 / DSM 1257 / FGSC 987)).